A 417-amino-acid polypeptide reads, in one-letter code: Probable histone-binding protein lin-53 (417 aa).

WD repeat units lie at residues 118 to 158 (NHEG…AVPR), 170 to 210 (GHTK…NVAG), 220 to 260 (GHES…PGHC), 263 to 303 (AHSA…MKLH), 307 to 347 (SHRD…EDQS), and 364 to 404 (GHTA…YNEV).

Belongs to the WD repeat RBAP46/RBAP48/MSI1 family. Binds directly to helix 1 of the histone fold of histone H4, a region that is not accessible when H4 is in chromatin. Probable component of a NuRD-like complex, composed of at least lin-53 and hda-1. Interacts with lin-35. Interacts with hda-1; the interaction is direct. Component of the DRM complex, at least composed of lin-9, lin-35, lin-37, lin-52, lin-53, lin-54- dpl-1 and efl-1. Interacts with hcp-3.

It is found in the nucleus. It localises to the chromosome. The protein resides in the centromere. In terms of biological role, core histone-binding subunit that may target chromatin assembly factors, chromatin remodeling factors and histone deacetylases to their histone substrates in a manner that is regulated by nucleosomal DNA. Required for hcp-3 and his-1 stabilization, localization of hcp-3 to centromeres and for proper chromosome segregation. Synthetic multivulva class B (synMuvB) protein. SynMuvB proteins are required to repress the induction of vulval development by Ras signaling and probably act by forming the multiprotein DRM complex that represses transcription. This is Probable histone-binding protein lin-53 from Caenorhabditis elegans.